We begin with the raw amino-acid sequence, 463 residues long: tRNA (guanine(37)-N(1))-methyltransferase (463 aa).

Residues His-207, 245-246 (DL), 274-275 (DG), and Asn-305 each bind S-adenosyl-L-methionine.

It belongs to the class I-like SAM-binding methyltransferase superfamily. TRM5/TYW2 family. Monomer.

It localises to the mitochondrion matrix. The protein localises to the nucleus. It is found in the cytoplasm. The enzyme catalyses guanosine(37) in tRNA + S-adenosyl-L-methionine = N(1)-methylguanosine(37) in tRNA + S-adenosyl-L-homocysteine + H(+). Its function is as follows. Specifically methylates the N1 position of guanosine-37 in various cytoplasmic and mitochondrial tRNAs. Methylation is not dependent on the nature of the nucleoside 5' of the target nucleoside. This is the first step in the biosynthesis of wybutosine (yW), a modified base adjacent to the anticodon of tRNAs and required for accurate decoding. In Pediculus humanus subsp. corporis (Body louse), this protein is tRNA (guanine(37)-N(1))-methyltransferase.